The primary structure comprises 393 residues: Acetate kinase (393 aa).

Asn-10 is a Mg(2+) binding site. Lys-17 contributes to the ATP binding site. Substrate is bound at residue Arg-89. Asp-146 (proton donor/acceptor) is an active-site residue. ATP contacts are provided by residues His-204–Gly-208, Asp-278–Arg-280, and Gly-323–Asn-327. Glu-376 contacts Mg(2+).

It belongs to the acetokinase family. In terms of assembly, homodimer. Mg(2+) serves as cofactor. Mn(2+) is required as a cofactor.

Its subcellular location is the cytoplasm. It carries out the reaction acetate + ATP = acetyl phosphate + ADP. The protein operates within metabolic intermediate biosynthesis; acetyl-CoA biosynthesis; acetyl-CoA from acetate: step 1/2. Catalyzes the formation of acetyl phosphate from acetate and ATP. Can also catalyze the reverse reaction. The sequence is that of Acetate kinase from Mycoplasma genitalium (strain ATCC 33530 / DSM 19775 / NCTC 10195 / G37) (Mycoplasmoides genitalium).